We begin with the raw amino-acid sequence, 481 residues long: Sucrose phosphorylase (481 aa).

Sucrose is bound by residues Asp49, His87, 191–193 (RLD), Glu234, 291–292 (HD), 335–338 (DIYQ), and Arg392. Catalysis depends on Asp193, which acts as the Nucleophile. The active-site Proton donor is Glu234.

Belongs to the glycosyl hydrolase 13 family. Sucrose phosphorylase subfamily.

It localises to the cytoplasm. The catalysed reaction is sucrose + phosphate = D-fructose + alpha-D-glucose 1-phosphate. Functionally, intracellular catabolism of sucrose. Being intracellular, probably not involved in synthesis of extracellular polysaccharides. The sequence is that of Sucrose phosphorylase from Streptococcus mutans serotype c (strain ATCC 700610 / UA159).